The sequence spans 205 residues: Dephospho-CoA kinase (205 aa).

Residues 3 to 204 enclose the DPCK domain; sequence KVGLTGGIGA…HRAHQPGESQ (202 aa). 11–16 is an ATP binding site; that stretch reads GAGKSE.

The protein belongs to the CoaE family.

The protein resides in the cytoplasm. It carries out the reaction 3'-dephospho-CoA + ATP = ADP + CoA + H(+). It functions in the pathway cofactor biosynthesis; coenzyme A biosynthesis; CoA from (R)-pantothenate: step 5/5. Catalyzes the phosphorylation of the 3'-hydroxyl group of dephosphocoenzyme A to form coenzyme A. The polypeptide is Dephospho-CoA kinase (Streptomyces avermitilis (strain ATCC 31267 / DSM 46492 / JCM 5070 / NBRC 14893 / NCIMB 12804 / NRRL 8165 / MA-4680)).